The chain runs to 142 residues: UPF0306 protein Ent638_3591 (142 aa).

The protein belongs to the UPF0306 family.

This Enterobacter sp. (strain 638) protein is UPF0306 protein Ent638_3591.